The chain runs to 127 residues: Fatty acid-binding protein, liver (127 aa).

M1 is subject to N-acetylmethionine. S11 bears the Phosphoserine mark. K31 and K36 each carry N6-succinyllysine. Phosphoserine is present on S39. An N6-succinyllysine modification is found at K46. Position 51 is a phosphothreonine (T51). Residue S56 is modified to Phosphoserine. K57, K78, and K90 each carry N6-succinyllysine. S100 is subject to Phosphoserine. K121 carries the post-translational modification N6-succinyllysine.

It belongs to the calycin superfamily. Fatty-acid binding protein (FABP) family. In terms of assembly, monomer.

Its subcellular location is the cytoplasm. Its function is as follows. Plays a role in lipoprotein-mediated cholesterol uptake in hepatocytes. Binds cholesterol. Binds free fatty acids and their coenzyme A derivatives, bilirubin, and some other small molecules in the cytoplasm. May be involved in intracellular lipid transport. The polypeptide is Fatty acid-binding protein, liver (FABP1) (Sus scrofa (Pig)).